Reading from the N-terminus, the 470-residue chain is ATP synthase subunit beta (470 aa).

Position 158–165 (158–165 (GGAGVGKT)) interacts with ATP.

This sequence belongs to the ATPase alpha/beta chains family. F-type ATPases have 2 components, CF(1) - the catalytic core - and CF(0) - the membrane proton channel. CF(1) has five subunits: alpha(3), beta(3), gamma(1), delta(1), epsilon(1). CF(0) has three main subunits: a(1), b(2) and c(9-12). The alpha and beta chains form an alternating ring which encloses part of the gamma chain. CF(1) is attached to CF(0) by a central stalk formed by the gamma and epsilon chains, while a peripheral stalk is formed by the delta and b chains.

It is found in the cell membrane. It catalyses the reaction ATP + H2O + 4 H(+)(in) = ADP + phosphate + 5 H(+)(out). Produces ATP from ADP in the presence of a proton gradient across the membrane. The catalytic sites are hosted primarily by the beta subunits. The sequence is that of ATP synthase subunit beta from Alkalihalophilus pseudofirmus (strain ATCC BAA-2126 / JCM 17055 / OF4) (Bacillus pseudofirmus).